A 171-amino-acid polypeptide reads, in one-letter code: Co-chaperone protein HscB (171 aa).

The J domain occupies aspartate 2–leucine 74.

This sequence belongs to the HscB family. Interacts with HscA and stimulates its ATPase activity. Interacts with IscU.

Functionally, co-chaperone involved in the maturation of iron-sulfur cluster-containing proteins. Seems to help targeting proteins to be folded toward HscA. The polypeptide is Co-chaperone protein HscB (Shigella sonnei (strain Ss046)).